Reading from the N-terminus, the 135-residue chain is Transcription antitermination protein NusB (135 aa).

It belongs to the NusB family.

Functionally, involved in transcription antitermination. Required for transcription of ribosomal RNA (rRNA) genes. Binds specifically to the boxA antiterminator sequence of the ribosomal RNA (rrn) operons. This is Transcription antitermination protein NusB from Lacticaseibacillus casei (strain BL23) (Lactobacillus casei).